The following is a 205-amino-acid chain: NAD(P)H dehydrogenase (quinone) (205 aa).

The Flavodoxin-like domain occupies 3–194 (VLVVYYSMYG…AAARYQGKHV (192 aa)). Residues 9-14 (SMYGHI) and 82-84 (TRF) contribute to the FMN site. Tyr11 contacts NAD(+). Trp102 is a binding site for substrate. Residue His138 participates in FMN binding.

This sequence belongs to the WrbA family. Requires FMN as cofactor.

The catalysed reaction is a quinone + NADH + H(+) = a quinol + NAD(+). It catalyses the reaction a quinone + NADPH + H(+) = a quinol + NADP(+). This is NAD(P)H dehydrogenase (quinone) from Geotalea daltonii (strain DSM 22248 / JCM 15807 / FRC-32) (Geobacter daltonii).